The chain runs to 1008 residues: Probable transport protein MmpL10 (1008 aa).

Transmembrane regions (helical) follow at residues 23-43 (WPWVVIGCWTLLALMLPMTVP), 202-222 (IELVIAVLLLTILMIIYRNPI), 225-245 (LLPLITIGASLMTAQAVVSGV), 257-277 (MIVLLSAMIAGAGTDYAVFLI), 301-321 (ALISLGKVIAASAATVGITFL), 340-360 (IGIAVAFLAAVTLMPALLVLA), 389-409 (VAYLSASMVILIVLALCASLV), 835-855 (DLQLIVIVTMIVVLLILMALL), 862-882 (IYLVGSVIVSYLSALGLCVLV), 895-915 (VPGLAFVVLVAVGADYNMLLA), 940-960 (VITAAGLIFAASMFGLLLSSI), and 961-981 (ATVVQAGFVLGSGILLDTFIV).

This sequence belongs to the resistance-nodulation-cell division (RND) (TC 2.A.6) family. MmpL subfamily.

It is found in the cell membrane. This chain is Probable transport protein MmpL10 (mmpL10), found in Mycobacterium leprae (strain TN).